A 135-amino-acid polypeptide reads, in one-letter code: Early E3 15.3 kDa protein (135 aa).

This sequence belongs to the adenoviridae E3_15 family.

Functionally, protects virus-infected cells from TNF-induced cytolysis. The polypeptide is Early E3 15.3 kDa protein (Human adenovirus B serotype 7 (HAdV-7)).